Reading from the N-terminus, the 542-residue chain is Organic anion transporter 3 (542 aa).

Topologically, residues 1 to 9 (MTFSEILDR) are cytoplasmic. Position 4 is a phosphoserine (Ser-4). A helical transmembrane segment spans residues 10–30 (VGSMGHFQFLHVAILGLPILN). Residues 31–123 (MANHNLLQIF…LVCNSNKLKE (93 aa)) lie on the Extracellular side of the membrane. N-linked (GlcNAc...) asparagine glycans are attached at residues Asn-86 and Asn-102. The helical transmembrane segment at 124-144 (MAQSIFMAGILIGGLVLGDLS) threads the bilayer. Residues 145–154 (DRFGRRPILT) are Cytoplasmic-facing. Residues 155–175 (CSYLLLAASGSGAAFSPTFPI) form a helical membrane-spanning segment. Tyr-176 is a topological domain (extracellular). Residues 177–197 (MVFRFLCGFGISGITLSTVIL) form a helical membrane-spanning segment. Residues 198-212 (NVEWVPTRMRAIMST) are Cytoplasmic-facing. The helical transmembrane segment at 213 to 233 (ALGYCYTFGQFILPGLAYAIP) threads the bilayer. Over 234–236 (QWR) the chain is Extracellular. Residues 237-257 (WLQLTVSIPFFVFFLSSWWTP) form a helical membrane-spanning segment. Topologically, residues 258-327 (ESIRWLVLSG…FRIPMLRRMT (70 aa)) are cytoplasmic. The helical transmembrane segment at 328-348 (FCLSLAWFATGFAYYSLAMGV) threads the bilayer. Residues 349–354 (EEFGVN) lie on the Extracellular side of the membrane. A helical membrane pass occupies residues 355–375 (LYILQIIFGGVDVPAKFITIL). The Cytoplasmic segment spans residues 376–386 (SLSYLGRHTTQ). The chain crosses the membrane as a helical span at residues 387–407 (AAALLLAGGAILALTFVPLDL). Residues 408–411 (QTVR) lie on the Extracellular side of the membrane. A helical transmembrane segment spans residues 412–432 (TVLAVFGKGCLSSSFSCLFLY). Residues 433–471 (TSELYPTVIRQTGMGVSNLWTRVGSMVSPLVKITGEVQP) are Cytoplasmic-facing. A helical membrane pass occupies residues 472–492 (FIPNIIYGITALLGGSAALFL). Topologically, residues 493 to 542 (PETLNQPLPETIEDLENWSLRAKKPKQEPEVEKASQRIPLQPHGPGLGSS) are extracellular. The disordered stretch occupies residues 515-542 (KKPKQEPEVEKASQRIPLQPHGPGLGSS). A compositionally biased stretch (basic and acidic residues) spans 517–527 (PKQEPEVEKAS).

It belongs to the major facilitator (TC 2.A.1) superfamily. Organic cation transporter (TC 2.A.1.19) family. As to expression, strongly expressed in kidney. Weaker expression in brain and skeletal muscle. Expressed in adrenal glands.

It is found in the basolateral cell membrane. It carries out the reaction estrone 3-sulfate(out) + glutarate(in) = estrone 3-sulfate(in) + glutarate(out). The enzyme catalyses estrone 3-sulfate(in) + 2-oxoglutarate(out) = estrone 3-sulfate(out) + 2-oxoglutarate(in). It catalyses the reaction glutarate(in) + 2-oxoglutarate(out) = glutarate(out) + 2-oxoglutarate(in). The catalysed reaction is urate(in) + 2-oxoglutarate(out) = urate(out) + 2-oxoglutarate(in). It carries out the reaction taurocholate(out) + glutarate(in) = taurocholate(in) + glutarate(out). The enzyme catalyses dehydroepiandrosterone 3-sulfate(out) + glutarate(in) = dehydroepiandrosterone 3-sulfate(in) + glutarate(out). It catalyses the reaction prostaglandin F2alpha(out) + glutarate(in) = prostaglandin F2alpha(in) + glutarate(out). The catalysed reaction is prostaglandin F2alpha(out) + 2-oxoglutarate(in) = prostaglandin F2alpha(in) + 2-oxoglutarate(out). It carries out the reaction (R)-carnitine(out) + 2-oxoglutarate(in) = (R)-carnitine(in) + 2-oxoglutarate(out). The enzyme catalyses glutarate(in) + (R)-carnitine(out) = glutarate(out) + (R)-carnitine(in). It catalyses the reaction prostaglandin E2(out) + 2-oxoglutarate(in) = prostaglandin E2(in) + 2-oxoglutarate(out). The catalysed reaction is prostaglandin E2(out) + glutarate(in) = prostaglandin E2(in) + glutarate(out). It carries out the reaction urate(in) + glutarate(out) = urate(out) + glutarate(in). The enzyme catalyses taurocholate(out) + 2-oxoglutarate(in) = taurocholate(in) + 2-oxoglutarate(out). It catalyses the reaction dehydroepiandrosterone 3-sulfate(out) + 2-oxoglutarate(in) = dehydroepiandrosterone 3-sulfate(in) + 2-oxoglutarate(out). The catalysed reaction is kynurenate(out) + a dicarboxylate(in) = kynurenate(in) + a dicarboxylate(out). It carries out the reaction (indol-3-yl)acetate(out) + a dicarboxylate(in) = (indol-3-yl)acetate(in) + a dicarboxylate(out). The enzyme catalyses indoxyl sulfate(out) + a dicarboxylate(in) = indoxyl sulfate(in) + a dicarboxylate(out). It catalyses the reaction N-benzoylglycine(out) + a dicarboxylate(in) = N-benzoylglycine(in) + a dicarboxylate(out). The catalysed reaction is 3-carboxy-4-methyl-5-propyl-2-furanpropanoate(out) + a dicarboxylate(in) = 3-carboxy-4-methyl-5-propyl-2-furanpropanoate(in) + a dicarboxylate(out). It carries out the reaction (6R)-L-erythro-5,6,7,8-tetrahydrobiopterin(out) + a dicarboxylate(in) = (6R)-L-erythro-5,6,7,8-tetrahydrobiopterin(in) + a dicarboxylate(out). The enzyme catalyses L-erythro-7,8-dihydrobiopterin(out) + a dicarboxylate(in) = L-erythro-7,8-dihydrobiopterin(in) + a dicarboxylate(out). It catalyses the reaction L-sepiapterin(out) + a dicarboxylate(in) = L-sepiapterin(in) + a dicarboxylate(out). Functions as an organic anion/dicarboxylate exchanger that couples organic anion uptake indirectly to the sodium gradient. Transports organic anions such as estrone 3-sulfate (E1S) and urate in exchange for dicarboxylates such as glutarate or ketoglutarate (2-oxoglutarate). Plays an important role in the excretion of endogenous and exogenous organic anions, especially from the kidney and the brain. E1S transport is pH- and chloride-dependent and may also involve E1S/cGMP exchange. Responsible for the transport of prostaglandin E2 (PGE2) and prostaglandin F2(alpha) (PGF2(alpha)) in the basolateral side of the renal tubule. Involved in the transport of neuroactive tryptophan metabolites kynurenate and xanthurenate. Functions as a biopterin transporters involved in the uptake and the secretion of coenzymes tetrahydrobiopterin (BH4), dihydrobiopterin (BH2) and sepiapterin to urine, thereby determining baseline levels of blood biopterins. May be involved in the basolateral transport of steviol, a metabolite of the popular sugar substitute stevioside. May participate in the detoxification/ renal excretion of drugs and xenobiotics, such as the histamine H(2)-receptor antagonists fexofenadine and cimetidine, the antibiotic benzylpenicillin (PCG), the anionic herbicide 2,4-dichloro-phenoxyacetate (2,4-D), the diagnostic agent p-aminohippurate (PAH), the antiviral acyclovir (ACV), and the mycotoxin ochratoxin (OTA), by transporting these exogenous organic anions across the cell membrane in exchange for dicarboxylates such as 2-oxoglutarate. Contributes to the renal uptake of potent uremic toxins (indoxyl sulfate (IS), indole acetate (IA), hippurate/N-benzoylglycine (HA) and 3-carboxy-4-methyl-5-propyl-2-furanpropionate (CMPF)), pravastatin, PCG, E1S and dehydroepiandrosterone sulfate (DHEAS), and is partly involved in the renal uptake of temocaprilat (an angiotensin-converting enzyme (ACE) inhibitor). May contribute to the release of cortisol in the adrenals. Involved in one of the detoxification systems on the choroid plexus (CP), removes substrates such as E1S or taurocholate (TC), PCG, 2,4-D and PAH, from the cerebrospinal fluid (CSF) to the blood for eventual excretion in urine and bile. Also contributes to the uptake of several other organic compounds such as the prostanoids prostaglandin E(2) and prostaglandin F(2-alpha), L-carnitine, and the therapeutic drugs allopurinol, 6-mercaptopurine (6-MP) and 5-fluorouracil (5-FU). Mediates the transport of PAH, PCG, and the statins pravastatin and pitavastatin, from the cerebrum into the blood circulation across the blood-brain barrier (BBB). In summary, plays a role in the efflux of drugs and xenobiotics, helping reduce their undesired toxicological effects on the body. The polypeptide is Organic anion transporter 3 (Homo sapiens (Human)).